We begin with the raw amino-acid sequence, 316 residues long: 4-hydroxy-3-methylbut-2-enyl diphosphate reductase (316 aa).

Cysteine 12 provides a ligand contact to [4Fe-4S] cluster. Residues histidine 41 and histidine 74 each contribute to the (2E)-4-hydroxy-3-methylbut-2-enyl diphosphate site. Residues histidine 41 and histidine 74 each coordinate dimethylallyl diphosphate. Isopentenyl diphosphate is bound by residues histidine 41 and histidine 74. Cysteine 96 provides a ligand contact to [4Fe-4S] cluster. Histidine 124 is a binding site for (2E)-4-hydroxy-3-methylbut-2-enyl diphosphate. Histidine 124 lines the dimethylallyl diphosphate pocket. Histidine 124 serves as a coordination point for isopentenyl diphosphate. The active-site Proton donor is glutamate 126. Threonine 168 contributes to the (2E)-4-hydroxy-3-methylbut-2-enyl diphosphate binding site. Cysteine 198 lines the [4Fe-4S] cluster pocket. The (2E)-4-hydroxy-3-methylbut-2-enyl diphosphate site is built by serine 226, serine 227, asparagine 228, and serine 270. Dimethylallyl diphosphate-binding residues include serine 226, serine 227, asparagine 228, and serine 270. Residues serine 226, serine 227, asparagine 228, and serine 270 each coordinate isopentenyl diphosphate.

This sequence belongs to the IspH family. Requires [4Fe-4S] cluster as cofactor.

The catalysed reaction is isopentenyl diphosphate + 2 oxidized [2Fe-2S]-[ferredoxin] + H2O = (2E)-4-hydroxy-3-methylbut-2-enyl diphosphate + 2 reduced [2Fe-2S]-[ferredoxin] + 2 H(+). It catalyses the reaction dimethylallyl diphosphate + 2 oxidized [2Fe-2S]-[ferredoxin] + H2O = (2E)-4-hydroxy-3-methylbut-2-enyl diphosphate + 2 reduced [2Fe-2S]-[ferredoxin] + 2 H(+). The protein operates within isoprenoid biosynthesis; dimethylallyl diphosphate biosynthesis; dimethylallyl diphosphate from (2E)-4-hydroxy-3-methylbutenyl diphosphate: step 1/1. Its pathway is isoprenoid biosynthesis; isopentenyl diphosphate biosynthesis via DXP pathway; isopentenyl diphosphate from 1-deoxy-D-xylulose 5-phosphate: step 6/6. Functionally, catalyzes the conversion of 1-hydroxy-2-methyl-2-(E)-butenyl 4-diphosphate (HMBPP) into a mixture of isopentenyl diphosphate (IPP) and dimethylallyl diphosphate (DMAPP). Acts in the terminal step of the DOXP/MEP pathway for isoprenoid precursor biosynthesis. This chain is 4-hydroxy-3-methylbut-2-enyl diphosphate reductase, found in Acinetobacter baumannii (strain AB307-0294).